Consider the following 282-residue polypeptide: NADPH-dependent 7-cyano-7-deazaguanine reductase (282 aa).

A substrate-binding site is contributed by 88–90 (IES). Position 90–91 (90–91 (SK)) interacts with NADPH. The active-site Thioimide intermediate is Cys190. The active-site Proton donor is the Asp197. 229 to 230 (HE) lines the substrate pocket. An NADPH-binding site is contributed by 258-259 (RG).

It belongs to the GTP cyclohydrolase I family. QueF type 2 subfamily. As to quaternary structure, homodimer.

It is found in the cytoplasm. It catalyses the reaction 7-aminomethyl-7-carbaguanine + 2 NADP(+) = 7-cyano-7-deazaguanine + 2 NADPH + 3 H(+). It functions in the pathway tRNA modification; tRNA-queuosine biosynthesis. Catalyzes the NADPH-dependent reduction of 7-cyano-7-deazaguanine (preQ0) to 7-aminomethyl-7-deazaguanine (preQ1). The polypeptide is NADPH-dependent 7-cyano-7-deazaguanine reductase (Shigella flexneri serotype 5b (strain 8401)).